We begin with the raw amino-acid sequence, 105 residues long: Large ribosomal subunit protein uL24 (105 aa).

It belongs to the universal ribosomal protein uL24 family. In terms of assembly, part of the 50S ribosomal subunit.

In terms of biological role, one of two assembly initiator proteins, it binds directly to the 5'-end of the 23S rRNA, where it nucleates assembly of the 50S subunit. One of the proteins that surrounds the polypeptide exit tunnel on the outside of the subunit. The sequence is that of Large ribosomal subunit protein uL24 from Psychrobacter arcticus (strain DSM 17307 / VKM B-2377 / 273-4).